The primary structure comprises 353 residues: Photosystem II D2 protein (353 aa).

T2 carries the post-translational modification N-acetylthreonine. At T2 the chain carries Phosphothreonine. A helical transmembrane segment spans residues 41–61 (CAYFALGGWFTGTTFVTSWYT). Chlorophyll a is bound at residue H118. Residues 125–141 (GFMLRQFELARSVQLRP) traverse the membrane as a helical segment. Pheophytin a is bound by residues Q130 and N143. The chain crosses the membrane as a helical span at residues 153–166 (VFVSVFLIYPLGQS). H198 serves as a coordination point for chlorophyll a. Residues 208-228 (AALLCAIHGATVENTLFEDGD) traverse the membrane as a helical segment. Residues H215 and F262 each coordinate a plastoquinone. H215 is a binding site for Fe cation. Position 269 (H269) interacts with Fe cation. The chain crosses the membrane as a helical span at residues 279-295 (GLWMSALGVVGLALNLR).

This sequence belongs to the reaction center PufL/M/PsbA/D family. As to quaternary structure, PSII is composed of 1 copy each of membrane proteins PsbA, PsbB, PsbC, PsbD, PsbE, PsbF, PsbH, PsbI, PsbJ, PsbK, PsbL, PsbM, PsbT, PsbX, PsbY, PsbZ, Psb30/Ycf12, at least 3 peripheral proteins of the oxygen-evolving complex and a large number of cofactors. It forms dimeric complexes. It depends on The D1/D2 heterodimer binds P680, chlorophylls that are the primary electron donor of PSII, and subsequent electron acceptors. It shares a non-heme iron and each subunit binds pheophytin, quinone, additional chlorophylls, carotenoids and lipids. There is also a Cl(-1) ion associated with D1 and D2, which is required for oxygen evolution. The PSII complex binds additional chlorophylls, carotenoids and specific lipids. as a cofactor.

It localises to the plastid. The protein localises to the chloroplast thylakoid membrane. It carries out the reaction 2 a plastoquinone + 4 hnu + 2 H2O = 2 a plastoquinol + O2. Functionally, photosystem II (PSII) is a light-driven water:plastoquinone oxidoreductase that uses light energy to abstract electrons from H(2)O, generating O(2) and a proton gradient subsequently used for ATP formation. It consists of a core antenna complex that captures photons, and an electron transfer chain that converts photonic excitation into a charge separation. The D1/D2 (PsbA/PsbD) reaction center heterodimer binds P680, the primary electron donor of PSII as well as several subsequent electron acceptors. D2 is needed for assembly of a stable PSII complex. The protein is Photosystem II D2 protein of Ranunculus macranthus (Large buttercup).